The following is a 384-amino-acid chain: Succinyl-diaminopimelate desuccinylase (384 aa).

Position 71 (H71) interacts with Zn(2+). The active site involves D73. D104 contacts Zn(2+). Residue E138 is the Proton acceptor of the active site. The Zn(2+) site is built by E139, E167, and H357.

This sequence belongs to the peptidase M20A family. DapE subfamily. In terms of assembly, homodimer. Zn(2+) serves as cofactor. Co(2+) is required as a cofactor.

It carries out the reaction N-succinyl-(2S,6S)-2,6-diaminopimelate + H2O = (2S,6S)-2,6-diaminopimelate + succinate. It participates in amino-acid biosynthesis; L-lysine biosynthesis via DAP pathway; LL-2,6-diaminopimelate from (S)-tetrahydrodipicolinate (succinylase route): step 3/3. Catalyzes the hydrolysis of N-succinyl-L,L-diaminopimelic acid (SDAP), forming succinate and LL-2,6-diaminopimelate (DAP), an intermediate involved in the bacterial biosynthesis of lysine and meso-diaminopimelic acid, an essential component of bacterial cell walls. The sequence is that of Succinyl-diaminopimelate desuccinylase from Blochmanniella floridana.